The primary structure comprises 123 residues: Small ribosomal subunit protein uS12 (123 aa).

The residue at position 89 (aspartate 89) is a 3-methylthioaspartic acid. Residues 104–123 (TAGVKDRKQARSKYGAKRPK) form a disordered region. Positions 113-123 (ARSKYGAKRPK) are enriched in basic residues.

This sequence belongs to the universal ribosomal protein uS12 family. Part of the 30S ribosomal subunit. Contacts proteins S8 and S17. May interact with IF1 in the 30S initiation complex.

In terms of biological role, with S4 and S5 plays an important role in translational accuracy. Its function is as follows. Interacts with and stabilizes bases of the 16S rRNA that are involved in tRNA selection in the A site and with the mRNA backbone. Located at the interface of the 30S and 50S subunits, it traverses the body of the 30S subunit contacting proteins on the other side and probably holding the rRNA structure together. The combined cluster of proteins S8, S12 and S17 appears to hold together the shoulder and platform of the 30S subunit. This Chromobacterium violaceum (strain ATCC 12472 / DSM 30191 / JCM 1249 / CCUG 213 / NBRC 12614 / NCIMB 9131 / NCTC 9757 / MK) protein is Small ribosomal subunit protein uS12.